A 210-amino-acid polypeptide reads, in one-letter code: UPF0301 protein M446_6268 (210 aa).

Belongs to the UPF0301 (AlgH) family.

The chain is UPF0301 protein M446_6268 from Methylobacterium sp. (strain 4-46).